The following is a 607-amino-acid chain: Isocitrate dehydrogenase kinase/phosphatase (607 aa).

ATP contacts are provided by residues 328-334 (APGIKGL) and K349. The active site involves D384.

This sequence belongs to the AceK family.

The protein resides in the cytoplasm. It carries out the reaction L-seryl-[isocitrate dehydrogenase] + ATP = O-phospho-L-seryl-[isocitrate dehydrogenase] + ADP + H(+). In terms of biological role, bifunctional enzyme which can phosphorylate or dephosphorylate isocitrate dehydrogenase (IDH) on a specific serine residue. This is a regulatory mechanism which enables bacteria to bypass the Krebs cycle via the glyoxylate shunt in response to the source of carbon. When bacteria are grown on glucose, IDH is fully active and unphosphorylated, but when grown on acetate or ethanol, the activity of IDH declines drastically concomitant with its phosphorylation. This Cupriavidus metallidurans (strain ATCC 43123 / DSM 2839 / NBRC 102507 / CH34) (Ralstonia metallidurans) protein is Isocitrate dehydrogenase kinase/phosphatase.